A 282-amino-acid polypeptide reads, in one-letter code: Pantothenate synthetase (282 aa).

26–33 (MGNLHEGH) contributes to the ATP binding site. Residue H33 is the Proton donor of the active site. Q57 serves as a coordination point for (R)-pantoate. Q57 lines the beta-alanine pocket. 144–147 (GQKD) is a binding site for ATP. Q150 contributes to the (R)-pantoate binding site. Residues L173 and 181–184 (LSSR) contribute to the ATP site.

This sequence belongs to the pantothenate synthetase family. In terms of assembly, homodimer.

The protein resides in the cytoplasm. It catalyses the reaction (R)-pantoate + beta-alanine + ATP = (R)-pantothenate + AMP + diphosphate + H(+). It participates in cofactor biosynthesis; (R)-pantothenate biosynthesis; (R)-pantothenate from (R)-pantoate and beta-alanine: step 1/1. Functionally, catalyzes the condensation of pantoate with beta-alanine in an ATP-dependent reaction via a pantoyl-adenylate intermediate. The polypeptide is Pantothenate synthetase (Albidiferax ferrireducens (strain ATCC BAA-621 / DSM 15236 / T118) (Rhodoferax ferrireducens)).